Reading from the N-terminus, the 419-residue chain is Inward rectifier potassium channel 16 (419 aa).

Topologically, residues 1 to 67 (MSYYGSSYRI…MVDIFTTLVD (67 aa)) are cytoplasmic. The helical transmembrane segment at 68–94 (TKWRHMFVIFSLSYILSWLIFGSIFWL) threads the bilayer. The Extracellular portion of the chain corresponds to 95 to 117 (IAFHHGDLLSDPDITPCVDNVHS). The helical; Pore-forming intramembrane region spans 118 to 134 (FTAAFLFSLETQTTIGY). The short motif at 131–136 (TIGYGY) is the Selectivity filter element. At 135 to 143 (GYRCVTEEC) the chain is on the extracellular side. A helical membrane pass occupies residues 144–171 (SVAVLTVILQSILSCIINTFIIGAALAK). Over 172–419 (MATARKRAQT…LNRISMESQM (248 aa)) the chain is Cytoplasmic. Residues Ser358, Ser374, and Ser376 each carry the phosphoserine modification.

It belongs to the inward rectifier-type potassium channel (TC 1.A.2.1) family. KCNJ16 subfamily. In terms of assembly, it forms heteromeric channels with Kir4.1/KCNJ10; this interaction is required for KCNJ16 localization to the basolateral membrane in kidney cells. As a heteromer with KCNJ10, may interact with MAGI1; this interaction may facilitate KCNJ10/KCNJ16 potassium channel expression at the basolateral membrane in kidney cells. May form heteromers with Kir2.1/KCNJ2. Can form heteromeric channels with Kir4.2/KCNJ15. In terms of tissue distribution, abundantly expressed in the proximal and distal segments of the nephron.

It localises to the membrane. Its subcellular location is the basolateral cell membrane. It catalyses the reaction K(+)(in) = K(+)(out). Its activity is regulated as follows. Channel activity is strongly regulated by variations of cytosolic pH; channels are activated by alkaline and inhibited by acidic pH values. Activated by phosphatidylinositol 4,5 biphosphate (PtdIns(4,5)P2). In terms of biological role, inward rectifier potassium channels are characterized by a greater tendency to allow potassium to flow into the cell rather than out of it. Their voltage dependence is regulated by the concentration of extracellular potassium; as external potassium is raised, the voltage range of the channel opening shifts to more positive voltages. The inward rectification is mainly due to the blockage of outward current by internal magnesium. KCNJ16 may be involved in the regulation of fluid and pH balance. In the kidney, together with KCNJ10, mediates basolateral K(+) recycling in distal tubules; this process is critical for Na(+) reabsorption at the tubules. This Mus musculus (Mouse) protein is Inward rectifier potassium channel 16 (Kcnj16).